The following is a 241-amino-acid chain: Probable transcriptional regulatory protein FMG_0893 (241 aa).

The protein belongs to the TACO1 family.

The protein localises to the cytoplasm. The chain is Probable transcriptional regulatory protein FMG_0893 from Finegoldia magna (strain ATCC 29328 / DSM 20472 / WAL 2508) (Peptostreptococcus magnus).